The sequence spans 346 residues: DNA repair protein XRCC3 (346 aa).

At Met-1 the chain carries N-acetylmethionine. Position 107-114 (107-114 (GRSSAGKT)) interacts with ATP.

Belongs to the RecA family. RAD51 subfamily. In terms of assembly, interacts with RAD51C and RAD51. Part of the CX3 complex consisting of RAD51C and XRCC3; the complex has a ring-like structure arranged into a flat disk around a central channel; CX3 can interact with RAD51 in vitro. Forms a complex with FANCD2, BRCA2 and phosphorylated FANCG. Interacts with SWSAP1 and ZSWIM7; involved in homologous recombination repair. Interacts directly with PALB2 which may serve as a scaffold for a HR complex containing PALB2, BRCA2, RAD51C, RAD51 and XRCC3.

It is found in the nucleus. The protein localises to the cytoplasm. Its subcellular location is the perinuclear region. It localises to the mitochondrion. Involved in the homologous recombination repair (HRR) pathway of double-stranded DNA, thought to repair chromosomal fragmentation, translocations and deletions. Part of the RAD51 paralog protein complex CX3 which acts in the BRCA1-BRCA2-dependent HR pathway. Upon DNA damage, CX3 acts downstream of RAD51 recruitment; the complex binds predominantly to the intersection of the four duplex arms of the Holliday junction (HJ) and to junctions of replication forks. Involved in HJ resolution and thus in processing HR intermediates late in the DNA repair process; the function may be linked to the CX3 complex and seems to involve GEN1 during mitotic cell cycle progression. Part of a PALB2-scaffolded HR complex containing BRCA2 and RAD51C and which is thought to play a role in DNA repair by HR. Plays a role in regulating mitochondrial DNA copy number under conditions of oxidative stress in the presence of RAD51 and RAD51C. This Homo sapiens (Human) protein is DNA repair protein XRCC3 (XRCC3).